Consider the following 192-residue polypeptide: Molybdenum cofactor guanylyltransferase (192 aa).

GTP contacts are provided by residues 10–12, K23, N51, D69, and D99; that span reads LAG. D99 serves as a coordination point for Mg(2+).

This sequence belongs to the MobA family. In terms of assembly, monomer. It depends on Mg(2+) as a cofactor.

The protein resides in the cytoplasm. It carries out the reaction Mo-molybdopterin + GTP + H(+) = Mo-molybdopterin guanine dinucleotide + diphosphate. In terms of biological role, transfers a GMP moiety from GTP to Mo-molybdopterin (Mo-MPT) cofactor (Moco or molybdenum cofactor) to form Mo-molybdopterin guanine dinucleotide (Mo-MGD) cofactor. This is Molybdenum cofactor guanylyltransferase from Haemophilus influenzae (strain 86-028NP).